Consider the following 181-residue polypeptide: Oligoribonuclease (181 aa).

The region spanning 8–171 (LIWIDLEMTG…DDIRESVAEL (164 aa)) is the Exonuclease domain. Residue tyrosine 129 is part of the active site.

This sequence belongs to the oligoribonuclease family.

It localises to the cytoplasm. Functionally, 3'-to-5' exoribonuclease specific for small oligoribonucleotides. The protein is Oligoribonuclease of Photorhabdus laumondii subsp. laumondii (strain DSM 15139 / CIP 105565 / TT01) (Photorhabdus luminescens subsp. laumondii).